A 102-amino-acid chain; its full sequence is Small ribosomal subunit protein uS10 (102 aa).

The interval 34–59 (QMSGPIPLPTKRLLVPTRKSPDGEGK) is disordered.

It belongs to the universal ribosomal protein uS10 family. In terms of assembly, part of the 30S ribosomal subunit.

Its function is as follows. Involved in the binding of tRNA to the ribosomes. In Methanopyrus kandleri (strain AV19 / DSM 6324 / JCM 9639 / NBRC 100938), this protein is Small ribosomal subunit protein uS10.